A 340-amino-acid chain; its full sequence is Phenylalanine--tRNA ligase alpha subunit (340 aa).

Position 255 (E255) interacts with Mg(2+).

The protein belongs to the class-II aminoacyl-tRNA synthetase family. Phe-tRNA synthetase alpha subunit type 1 subfamily. In terms of assembly, tetramer of two alpha and two beta subunits. The cofactor is Mg(2+).

The protein resides in the cytoplasm. The enzyme catalyses tRNA(Phe) + L-phenylalanine + ATP = L-phenylalanyl-tRNA(Phe) + AMP + diphosphate + H(+). This Desulforamulus reducens (strain ATCC BAA-1160 / DSM 100696 / MI-1) (Desulfotomaculum reducens) protein is Phenylalanine--tRNA ligase alpha subunit.